The chain runs to 488 residues: GTPase Der (488 aa).

EngA-type G domains are found at residues 3 to 166 and 193 to 366; these read PVIA…PRDP and IKIA…MSAV. GTP is bound by residues 9–16, 56–60, 118–121, 199–206, 246–250, and 311–314; these read GRPNVGKS, DTGGI, NKID, DTAGV, and NKWD. The 85-residue stretch at 367–451 folds into the KH-like domain; sequence TRWPTSRLTQ…PIRIEYKGGD (85 aa). Residues 449 to 461 are compositionally biased toward basic and acidic residues; that stretch reads GGDNPFEGKKNTL. A disordered region spans residues 449–488; the sequence is GGDNPFEGKKNTLTDRQVNKKRRLMSHHKKAEKKRRDKRK. A compositionally biased stretch (basic residues) spans 467 to 488; it reads NKKRRLMSHHKKAEKKRRDKRK.

The protein belongs to the TRAFAC class TrmE-Era-EngA-EngB-Septin-like GTPase superfamily. EngA (Der) GTPase family. In terms of assembly, associates with the 50S ribosomal subunit.

Functionally, GTPase that plays an essential role in the late steps of ribosome biogenesis. This Pseudomonas entomophila (strain L48) protein is GTPase Der.